Consider the following 338-residue polypeptide: MTGKIKIGINGFGRIGRLVARVALARDDVELVAVNDPFITTDYMTYMFKYDTVHGQWKHHELKVKDEKTLLFGEKPVTVFGCRNPEEIPWGETGAEFVVESTGVFTTKEKASAHLKGGAKKVVISAPSADAPMFVVGVNHTEYKSDIDIVSNASCTTNCLAPLAKVINDRFGIVEGLMTTVHAMTATQKTVDGPSSKDWRGGRAASFNIIPSSTGAAKAVGKVLPALNGKLTGMAFRVPTVDVSVVGLTVRLEKKATYADIKAAIKEESEGKLKGILGYTEDDVVSTDFIGDNRSSIFDAKAGIALNDNCVKLVSWYDNEWGYSSRVVDLIVHMSKTQ.

NAD(+)-binding positions include 14-15, Asp-36, and Arg-83; that span reads RI. Residues 154-156, Thr-185, 214-215, and Arg-237 contribute to the D-glyceraldehyde 3-phosphate site; these read SCT and TG. Catalysis depends on Cys-155, which acts as the Nucleophile. Residue Asn-319 participates in NAD(+) binding.

Belongs to the glyceraldehyde-3-phosphate dehydrogenase family. As to quaternary structure, homotetramer.

The protein resides in the cytoplasm. It catalyses the reaction D-glyceraldehyde 3-phosphate + phosphate + NAD(+) = (2R)-3-phospho-glyceroyl phosphate + NADH + H(+). It participates in carbohydrate degradation; glycolysis; pyruvate from D-glyceraldehyde 3-phosphate: step 1/5. Its function is as follows. Key enzyme in glycolysis that catalyzes the first step of the pathway by converting D-glyceraldehyde 3-phosphate (G3P) into 3-phospho-D-glyceroyl phosphate. Essential for the maintenance of cellular ATP levels and carbohydrate metabolism. The protein is Glyceraldehyde-3-phosphate dehydrogenase, cytosolic (GAPC) of Ranunculus acris (Meadow buttercup).